The sequence spans 284 residues: L-ribulose-5-phosphate 3-epimerase UlaE (284 aa).

This sequence belongs to the L-ribulose-5-phosphate 3-epimerase family.

The enzyme catalyses L-ribulose 5-phosphate = L-xylulose 5-phosphate. The protein operates within cofactor degradation; L-ascorbate degradation; D-xylulose 5-phosphate from L-ascorbate: step 3/4. Its function is as follows. Catalyzes the isomerization of L-xylulose-5-phosphate to L-ribulose-5-phosphate. Is involved in the anaerobic L-ascorbate utilization. This chain is L-ribulose-5-phosphate 3-epimerase UlaE, found in Salmonella dublin (strain CT_02021853).